The following is a 164-amino-acid chain: F-box protein At4g05010 (164 aa).

The tract at residues 38-57 is disordered; it reads SKRAPENDSPPVKRPSHETT. The F-box domain occupies 61 to 109; the sequence is RSLLETLHQDILIRVLCHVDHEDLATLKRVSKTIRKAVIEAKKSHFDYS.

The chain is F-box protein At4g05010 from Arabidopsis thaliana (Mouse-ear cress).